Here is a 389-residue protein sequence, read N- to C-terminus: Chalcone synthase 1A (389 aa).

Cys-164 is an active-site residue.

This sequence belongs to the thiolase-like superfamily. Chalcone/stilbene synthases family.

The enzyme catalyses (E)-4-coumaroyl-CoA + 3 malonyl-CoA + 3 H(+) = 2',4,4',6'-tetrahydroxychalcone + 3 CO2 + 4 CoA. Its pathway is secondary metabolite biosynthesis; flavonoid biosynthesis. Its function is as follows. The primary product of this enzyme is 4,2',4',6'-tetrahydroxychalcone (also termed naringenin-chalcone or chalcone) which can under specific conditions spontaneously isomerize into naringenin. The chain is Chalcone synthase 1A (CHS-1A) from Pisum sativum (Garden pea).